A 414-amino-acid polypeptide reads, in one-letter code: Glutamyl-tRNA reductase (414 aa).

Substrate-binding positions include 49–52, Ser108, 113–115, and Gln119; these read TCNR and EPQ. Cys50 functions as the Nucleophile in the catalytic mechanism. 188 to 193 lines the NADP(+) pocket; the sequence is GAGQTG.

The protein belongs to the glutamyl-tRNA reductase family. In terms of assembly, homodimer.

It catalyses the reaction (S)-4-amino-5-oxopentanoate + tRNA(Glu) + NADP(+) = L-glutamyl-tRNA(Glu) + NADPH + H(+). It participates in porphyrin-containing compound metabolism; protoporphyrin-IX biosynthesis; 5-aminolevulinate from L-glutamyl-tRNA(Glu): step 1/2. Catalyzes the NADPH-dependent reduction of glutamyl-tRNA(Glu) to glutamate 1-semialdehyde (GSA). This is Glutamyl-tRNA reductase from Francisella tularensis subsp. tularensis (strain WY96-3418).